The chain runs to 1072 residues: DNA-directed RNA polymerase subunit beta (1072 aa).

It belongs to the RNA polymerase beta chain family. In plastids the minimal PEP RNA polymerase catalytic core is composed of four subunits: alpha, beta, beta', and beta''. When a (nuclear-encoded) sigma factor is associated with the core the holoenzyme is formed, which can initiate transcription.

Its subcellular location is the plastid. It localises to the chloroplast. It carries out the reaction RNA(n) + a ribonucleoside 5'-triphosphate = RNA(n+1) + diphosphate. Its function is as follows. DNA-dependent RNA polymerase catalyzes the transcription of DNA into RNA using the four ribonucleoside triphosphates as substrates. The protein is DNA-directed RNA polymerase subunit beta of Arabis hirsuta (Hairy rock-cress).